Reading from the N-terminus, the 147-residue chain is UPF0275 protein PM0504 (147 aa).

Belongs to the UPF0275 family.

This Pasteurella multocida (strain Pm70) protein is UPF0275 protein PM0504.